The following is a 456-amino-acid chain: Argininosuccinate lyase (456 aa).

It belongs to the lyase 1 family. Argininosuccinate lyase subfamily.

It is found in the cytoplasm. The catalysed reaction is 2-(N(omega)-L-arginino)succinate = fumarate + L-arginine. Its pathway is amino-acid biosynthesis; L-arginine biosynthesis; L-arginine from L-ornithine and carbamoyl phosphate: step 3/3. The protein is Argininosuccinate lyase of Shewanella amazonensis (strain ATCC BAA-1098 / SB2B).